A 239-amino-acid chain; its full sequence is Ribonuclease P protein component 3 (239 aa).

The protein belongs to the eukaryotic/archaeal RNase P protein component 3 family. As to quaternary structure, consists of a catalytic RNA component and at least 4-5 protein subunits.

The protein localises to the cytoplasm. It carries out the reaction Endonucleolytic cleavage of RNA, removing 5'-extranucleotides from tRNA precursor.. Its function is as follows. Part of ribonuclease P, a protein complex that generates mature tRNA molecules by cleaving their 5'-ends. In Methanosarcina mazei (strain ATCC BAA-159 / DSM 3647 / Goe1 / Go1 / JCM 11833 / OCM 88) (Methanosarcina frisia), this protein is Ribonuclease P protein component 3.